The chain runs to 553 residues: LIM domain-containing protein B (553 aa).

Residues 43–115 (LTYKDPNVST…SINNNISNNN (73 aa)) form a disordered region. Residues 99–114 (GPGLPNNSINNNISNN) are compositionally biased toward low complexity. LIM zinc-binding domains follow at residues 205–262 (PICG…ELFS), 263–322 (PRCF…RQKR), 328–387 (EICS…KQIL), 388–447 (NICG…FFGR), and 448–505 (QCFK…LPKE). Residues 534–553 (ELKKERERAAKEKEKESKAK) are disordered.

It localises to the cytoplasm. The protein resides in the cell cortex. Its subcellular location is the cytoskeleton. In terms of biological role, regulates and controls rearrangements of the actin cytoskeleton. Required for tip formation, morphogenesis, cell adhesion and motility, chemotaxis and aggregates formation. May function downstream of paxB. The sequence is that of LIM domain-containing protein B (limB) from Dictyostelium discoideum (Social amoeba).